Consider the following 519-residue polypeptide: MTAESGDQIPTVHVATSLPKRRVSSSVLIVPVVSTGDDEQSGERPGAVVASAEPFLSADAIAEIEAGLRALDATGASDQVHRLVVSSLPVSSVLTVGLGKPRYEWTPDAVRRAAGAAARALGTAKAVVTTLADLPGDGVCAAAVEGLILGSYRFSAFRSAKTAPKDAGLHKITVLTTTKDARKHCAHGAAVATAVATARDLVNTPPSHLYPAELARRAKVLGESVGLEVQVLDEKALQKAGYGGLVGVGQGSSRPPRLVRLTHRGSRLAKNPRRAKKVALVGKGVTFDTGGISIKPAASMHYMTSDMGGAAAVIATVALAAQLELPINVIATVPIAENMPSATAQRPGDVLTQYGGTTVEVLNTDAEGRLILADAIVRACEDNPDYLIETSTLTGAQTVALGARIPGVMGSDEFRDRVAAISQQVGENGWPMPLPDELKDDLKSTVADLANVSGQRFAGMLVAGVFLREFVADAVDWAHIDVAGPAYNTGSAWGYTPKGATGVPTRTMFAVLEDIAANG.

2 residues coordinate Mn(2+): Lys-283 and Asp-288. Residue Lys-295 is part of the active site. Residues Asp-306, Asp-365, and Glu-367 each coordinate Mn(2+). The active site involves Arg-369.

This sequence belongs to the peptidase M17 family. Requires Mn(2+) as cofactor.

The protein localises to the cytoplasm. It carries out the reaction Release of an N-terminal amino acid, Xaa-|-Yaa-, in which Xaa is preferably Leu, but may be other amino acids including Pro although not Arg or Lys, and Yaa may be Pro. Amino acid amides and methyl esters are also readily hydrolyzed, but rates on arylamides are exceedingly low.. The enzyme catalyses Release of an N-terminal amino acid, preferentially leucine, but not glutamic or aspartic acids.. Functionally, presumably involved in the processing and regular turnover of intracellular proteins. Catalyzes the removal of unsubstituted N-terminal amino acids from various peptides. In Mycobacterium ulcerans (strain Agy99), this protein is Probable cytosol aminopeptidase.